An 86-amino-acid polypeptide reads, in one-letter code: UPF0297 protein STH1998 (86 aa).

The protein belongs to the UPF0297 family.

The protein is UPF0297 protein STH1998 of Symbiobacterium thermophilum (strain DSM 24528 / JCM 14929 / IAM 14863 / T).